The following is a 372-amino-acid chain: Glutamine synthetase (372 aa).

The GS beta-grasp domain maps to 26–105 (IIAEYVWIDS…VLAECWNNDG (80 aa)). A GS catalytic domain is found at 112-372 (HRHEAAKLFE…MTKEYERESL (261 aa)).

It belongs to the glutamine synthetase family. As to quaternary structure, homooctamer.

Its subcellular location is the cytoplasm. It catalyses the reaction L-glutamate + NH4(+) + ATP = L-glutamine + ADP + phosphate + H(+). In Kluyveromyces lactis (strain ATCC 8585 / CBS 2359 / DSM 70799 / NBRC 1267 / NRRL Y-1140 / WM37) (Yeast), this protein is Glutamine synthetase (GLN1).